The sequence spans 443 residues: Deoxyguanosinetriphosphate triphosphohydrolase-like protein (443 aa).

Residues 61–246 (RLTHSLEVAC…MEAADDICYG (186 aa)) form the HD domain.

It belongs to the dGTPase family. Type 3 subfamily.

The sequence is that of Deoxyguanosinetriphosphate triphosphohydrolase-like protein from Pseudomonas aeruginosa (strain LESB58).